The following is a 728-amino-acid chain: Phosphoribosylformylglycinamidine synthase subunit PurL (728 aa).

His42 is an active-site residue. Residues Tyr45 and Lys84 each coordinate ATP. Glu86 is a Mg(2+) binding site. Substrate-binding positions include 87–90 and Arg109; that span reads SHNH. His88 functions as the Proton acceptor in the catalytic mechanism. Asp110 provides a ligand contact to Mg(2+). A substrate-binding site is contributed by Gln237. A Mg(2+)-binding site is contributed by Asp265. 309–311 contributes to the substrate binding site; it reads ESQ. Residues Asp491 and Gly528 each coordinate ATP. Residue Asn529 participates in Mg(2+) binding. Ser531 is a substrate binding site.

Belongs to the FGAMS family. As to quaternary structure, monomer. Part of the FGAM synthase complex composed of 1 PurL, 1 PurQ and 2 PurS subunits.

It localises to the cytoplasm. The catalysed reaction is N(2)-formyl-N(1)-(5-phospho-beta-D-ribosyl)glycinamide + L-glutamine + ATP + H2O = 2-formamido-N(1)-(5-O-phospho-beta-D-ribosyl)acetamidine + L-glutamate + ADP + phosphate + H(+). Its pathway is purine metabolism; IMP biosynthesis via de novo pathway; 5-amino-1-(5-phospho-D-ribosyl)imidazole from N(2)-formyl-N(1)-(5-phospho-D-ribosyl)glycinamide: step 1/2. Part of the phosphoribosylformylglycinamidine synthase complex involved in the purines biosynthetic pathway. Catalyzes the ATP-dependent conversion of formylglycinamide ribonucleotide (FGAR) and glutamine to yield formylglycinamidine ribonucleotide (FGAM) and glutamate. The FGAM synthase complex is composed of three subunits. PurQ produces an ammonia molecule by converting glutamine to glutamate. PurL transfers the ammonia molecule to FGAR to form FGAM in an ATP-dependent manner. PurS interacts with PurQ and PurL and is thought to assist in the transfer of the ammonia molecule from PurQ to PurL. The protein is Phosphoribosylformylglycinamidine synthase subunit PurL of Campylobacter jejuni subsp. jejuni serotype O:23/36 (strain 81-176).